Consider the following 89-residue polypeptide: Large ribosomal subunit protein bL27 (89 aa).

The protein belongs to the bacterial ribosomal protein bL27 family.

The chain is Large ribosomal subunit protein bL27 from Cytophaga hutchinsonii (strain ATCC 33406 / DSM 1761 / CIP 103989 / NBRC 15051 / NCIMB 9469 / D465).